The sequence spans 283 residues: uncharacterized protein (283 aa).

The next 4 membrane-spanning stretches (helical) occupy residues 11 to 31, 35 to 55, 56 to 76, and 93 to 113; these read LFAYFSGLIAALSLFIYYVSA, EGALILCITFGVIAAGIWFGP, IYALAVTLIVLFVLGTLMMFF, and LVVWGIALLLFSFISGRIHDI. Positions 162-283 constitute a GGDEF domain; it reads NSFVFLLLHM…LENEMMMNEL (122 aa).

It is found in the cell membrane. This is an uncharacterized protein from Bacillus subtilis (strain 168).